The sequence spans 327 residues: MAAPRSCVLWSYCGHGWSRLAGDCRLPGFRRSWLGATLSARSLSQEKRAAETHFGFETVSEKEKGGKVYQVFQSVARKYDLMNDMMSLGIHRAWKDLLIRKMHPLPGTQLLDVAGGTGDIAFRFLSYVQTQHERKQRRQLRTRQNLSWEEIARKYQSKEDPLGGSLVMVCDINREMLKVGKQKALARGHTAGLAWVLGDAEELPFDDDRFDVYTIAFGIRNVTHIDRALQEAHRVLKPGGRFLCLEFSQVNDPLISRLYDLYSFQVIPVIGEVIAGDWKSYQYLVESIRKFPNQEEFKDMIEDAGFQKVTYESLTSGIVAIHSGFKL.

The transit peptide at 1 to 49 (MAAPRSCVLWSYCGHGWSRLAGDCRLPGFRRSWLGATLSARSLSQEKRA) directs the protein to the mitochondrion. Residues threonine 117, aspartate 171, and 199 to 200 (DA) each bind S-adenosyl-L-methionine.

Belongs to the class I-like SAM-binding methyltransferase superfamily. MenG/UbiE family. As to quaternary structure, component of a multi-subunit COQ enzyme complex, composed of at least COQ3, COQ4, COQ5, COQ6, COQ7 and COQ9. Interacts with PYURF; the interaction is direct, stabilizes COQ5 protein and associates PYURF with COQ enzyme complex.

The protein resides in the mitochondrion inner membrane. It catalyses the reaction 2-methoxy-6-(all-trans-decaprenyl)benzene-1,4-diol + S-adenosyl-L-methionine = 5-methoxy-2-methyl-3-(all-trans-decaprenyl)benzene-1,4-diol + S-adenosyl-L-homocysteine + H(+). It participates in cofactor biosynthesis; ubiquinone biosynthesis. In terms of biological role, methyltransferase required for the conversion of 2-decaprenyl-6-methoxy-1,4-benzoquinol (DDMQH2) to 2-decaprenyl-3-methyl-6-methoxy-1,4-benzoquinol (DMQH2). This is 2-methoxy-6-polyprenyl-1,4-benzoquinol methylase, mitochondrial from Rattus norvegicus (Rat).